The chain runs to 113 residues: Putative pterin-4-alpha-carbinolamine dehydratase (113 aa).

The protein belongs to the pterin-4-alpha-carbinolamine dehydratase family.

The enzyme catalyses (4aS,6R)-4a-hydroxy-L-erythro-5,6,7,8-tetrahydrobiopterin = (6R)-L-erythro-6,7-dihydrobiopterin + H2O. The chain is Putative pterin-4-alpha-carbinolamine dehydratase from Bordetella bronchiseptica (strain ATCC BAA-588 / NCTC 13252 / RB50) (Alcaligenes bronchisepticus).